Reading from the N-terminus, the 186-residue chain is Ribosome-recycling factor (186 aa).

This sequence belongs to the RRF family.

It localises to the cytoplasm. In terms of biological role, responsible for the release of ribosomes from messenger RNA at the termination of protein biosynthesis. May increase the efficiency of translation by recycling ribosomes from one round of translation to another. This is Ribosome-recycling factor from Burkholderia mallei (strain NCTC 10247).